The following is a 190-amino-acid chain: MSGACTSYVSAEQEVVRGFSCPRPGGEAAAVFCCGFRDHKYCCDDPHSFFPYEHSYMWWLSIGALIGLSVAAVVLLAFIVTACVLCYLFISSKPHTKLDLGLSLQTAGPEEVSPDCQGVNTGMAAEVPKVSPLQQSYSCLNPQLESNEGQAVNSKRLLHHCFMATVTTSDIPGSPEEASVPNPDLCGPVP.

The next 2 membrane-spanning stretches (helical) occupy residues 48 to 68 (SFFP…LIGL) and 70 to 90 (VAAV…YLFI).

This sequence belongs to the shisa family.

The protein localises to the membrane. The sequence is that of Protein shisa-like-2A from Homo sapiens (Human).